The primary structure comprises 442 residues: D(2) dopamine receptor A (442 aa).

Topologically, residues 1 to 31 (MDPQNLSMYNDDINNGTNGTAVDQKPHYNYY) are extracellular. Asn-5, Asn-15, and Asn-18 each carry an N-linked (GlcNAc...) asparagine glycan. A helical membrane pass occupies residues 32–54 (AMLLTLLVFVIVFGNVLVCIAVS). Residues 55-64 (REKALQTTTN) lie on the Cytoplasmic side of the membrane. A helical transmembrane segment spans residues 65-87 (YLIVSLAVADLLVATLVMPWAVY). Over 88 to 102 (MEVVGEWRFSRIHCD) the chain is Extracellular. Cys-101 and Cys-176 are disulfide-bonded. A helical transmembrane segment spans residues 103–124 (IFVTLDVMMCTASILNLCAISI). Residues 125–145 (DRYTAVAMPMLYNTRYSSKRR) lie on the Cytoplasmic side of the membrane. The chain crosses the membrane as a helical span at residues 146–166 (VTVMISVVWVLSFAISCPLLF). The Extracellular portion of the chain corresponds to 167-182 (GLNNTGSKVCIIDNPA). Residues 183-207 (FVIYSSIVSFYVPFIVTLLVYVQIY) form a helical membrane-spanning segment. The Cytoplasmic segment spans residues 208–372 (IVLRKRRKRV…SQHKEKKATQ (165 aa)). The disordered stretch occupies residues 273 to 335 (DMEMEMMSST…KNGHPKDSTK (63 aa)). Over residues 304 to 318 (ATSNQCKNASLTSPV) the composition is skewed to polar residues. The span at 322-335 (YKAEKNGHPKDSTK) shows a compositional bias: basic and acidic residues. Residues 373–394 (MLAIVLGVFIICWLPFFIIHIL) form a helical membrane-spanning segment. Residues 395-408 (NMHCNCNIPQALYS) lie on the Extracellular side of the membrane. An intrachain disulfide couples Cys-398 to Cys-400. Residues 409-430 (AFTWLGYVNSAVNPIIYTTFNV) traverse the membrane as a helical segment. The Cytoplasmic segment spans residues 431 to 442 (EFRKAFIKILHC). Cys-442 carries S-palmitoyl cysteine lipidation.

This sequence belongs to the G-protein coupled receptor 1 family. Palmitoylated. Palmitoylation is probably required for proper localization to the plasma membrane and stability of the receptor. In terms of tissue distribution, brain; pituitary.

It localises to the cell membrane. Its subcellular location is the golgi apparatus membrane. This is one of the five types (D1 to D5) of receptors for dopamine. The activity of this receptor is mediated by G proteins which inhibits adenylyl cyclase. In Xenopus D2R is involved in the regulation of the melanotrope cells of the intermediate pituitary during background adaptation of the animal. The protein is D(2) dopamine receptor A (drd2-a) of Xenopus laevis (African clawed frog).